Consider the following 303-residue polypeptide: tRNA dimethylallyltransferase (303 aa).

ATP is bound at residue 12-19 (GPTGVGKT). 14–19 (TGVGKT) lines the substrate pocket. An interaction with substrate tRNA region spans residues 37–40 (DSAQ).

The protein belongs to the IPP transferase family. As to quaternary structure, monomer. The cofactor is Mg(2+).

The enzyme catalyses adenosine(37) in tRNA + dimethylallyl diphosphate = N(6)-dimethylallyladenosine(37) in tRNA + diphosphate. In terms of biological role, catalyzes the transfer of a dimethylallyl group onto the adenine at position 37 in tRNAs that read codons beginning with uridine, leading to the formation of N6-(dimethylallyl)adenosine (i(6)A). The polypeptide is tRNA dimethylallyltransferase (Fusobacterium nucleatum subsp. nucleatum (strain ATCC 25586 / DSM 15643 / BCRC 10681 / CIP 101130 / JCM 8532 / KCTC 2640 / LMG 13131 / VPI 4355)).